We begin with the raw amino-acid sequence, 735 residues long: Protein RETICULATA-RELATED 5, chloroplastic (735 aa).

The transit peptide at Met1–Pro75 directs the protein to the chloroplast. Helical transmembrane passes span Ala519–Tyr539 and Val582–Gly602. The span at Ala714 to Glu726 shows a compositional bias: polar residues. Positions Ala714–Gln735 are disordered.

This sequence belongs to the RETICULATA family.

It localises to the plastid. The protein resides in the chloroplast membrane. Its function is as follows. May play a role in leaf development. This Arabidopsis thaliana (Mouse-ear cress) protein is Protein RETICULATA-RELATED 5, chloroplastic.